The chain runs to 419 residues: UDP-N-acetylglucosamine 1-carboxyvinyltransferase (419 aa).

Position 22–23 (22–23 (KN)) interacts with phosphoenolpyruvate. Residue arginine 91 coordinates UDP-N-acetyl-alpha-D-glucosamine. The active-site Proton donor is the cysteine 115. Cysteine 115 bears the 2-(S-cysteinyl)pyruvic acid O-phosphothioketal mark. Residues 120–124 (RPVDL), 160–163 (KVSV), aspartate 305, and isoleucine 327 contribute to the UDP-N-acetyl-alpha-D-glucosamine site.

It belongs to the EPSP synthase family. MurA subfamily.

The protein localises to the cytoplasm. It catalyses the reaction phosphoenolpyruvate + UDP-N-acetyl-alpha-D-glucosamine = UDP-N-acetyl-3-O-(1-carboxyvinyl)-alpha-D-glucosamine + phosphate. Its pathway is cell wall biogenesis; peptidoglycan biosynthesis. In vitro inhibited by covalent binding of fosfomycin and the fungal product terreic acid in the presence of substrate UDP-N-acetylglucosamine, with an inactivation rate constant of 130 M(-1)sec(-1) for terreic acid. In terms of biological role, cell wall formation. Adds enolpyruvyl to UDP-N-acetylglucosamine. Target for the antibiotic fosfomycin. The sequence is that of UDP-N-acetylglucosamine 1-carboxyvinyltransferase from Enterobacter cloacae subsp. cloacae (strain ATCC 13047 / DSM 30054 / NBRC 13535 / NCTC 10005 / WDCM 00083 / NCDC 279-56).